Here is a 1039-residue protein sequence, read N- to C-terminus: Probable calcium-transporting ATPase 9, plasma membrane-type (1039 aa).

Residues 1-175 (MEKLDRYLQE…FVWDALQDMT (175 aa)) lie on the Cytoplasmic side of the membrane. 2 consecutive transmembrane segments (helical) span residues 176–196 (LIIL…TEGW) and 199–219 (GMYD…VTAV). The Cytoplasmic segment spans residues 220–250 (SDYKQSLQFKELDNEKKKIFIHVTRDGRRQK). Transmembrane regions (helical) follow at residues 251–271 (ISIY…DQVP) and 353–373 (VATI…LVLL). The Cytoplasmic segment spans residues 374–406 (VRFLIDKGMTVGLLKWYSTDALTIVNYFATAVT). The helical transmembrane segment at 407–427 (IIVVAVPEGLPLAVTLSLAFA) threads the bilayer. The 4-aspartylphosphate intermediate role is filled by Asp-456. Residues Asp-758 and Asp-762 each contribute to the Mg(2+) site. A helical membrane pass occupies residues 825 to 845 (IVALVINFVSACIIGSAPLTA). The Cytoplasmic segment spans residues 846-847 (VQ). The next 2 membrane-spanning stretches (helical) occupy residues 848–868 (LLWV…TEPP) and 892–912 (NIMG…FGGE). The Cytoplasmic segment spans residues 913–960 (RLLNIKGADSKSIINTLIFNSFVFCQVFNEINSREMQKINVFRGIISN). 2 helical membrane passes run 961–981 (WIFI…IEFL) and 995–1015 (WLLS…LKCI). The Cytoplasmic portion of the chain corresponds to 1016–1039 (PVGSGETSATPNGYRPLANGPDDI).

It belongs to the cation transport ATPase (P-type) (TC 3.A.3) family. Type IIB subfamily.

It localises to the membrane. The catalysed reaction is Ca(2+)(in) + ATP + H2O = Ca(2+)(out) + ADP + phosphate + H(+). Its activity is regulated as follows. Activated by calmodulin. Its function is as follows. This magnesium-dependent enzyme catalyzes the hydrolysis of ATP coupled with the translocation of calcium from the cytosol out of the cell, into the endoplasmic reticulum, or into organelles. In Oryza sativa subsp. japonica (Rice), this protein is Probable calcium-transporting ATPase 9, plasma membrane-type.